Consider the following 405-residue polypeptide: CMP-sialic acid transporter 4 (405 aa).

Residues 1-43 (MQRNGVMECSVCHSKVVAPSPRSVSRAYDKHRSKISSKYRALN) are Cytoplasmic-facing. Residues 44 to 64 (FLLVSGDCILVGLQPILVFMS) traverse the membrane as a helical segment. Residues 65 to 74 (KVDGKFQFSP) are Lumenal-facing. Residues 75 to 95 (ISVNFLTEVTKVIFAIVMLII) form a helical membrane-spanning segment. At 96-121 (QSRKQKVGEKPLLSLSTFVQAARNNA) the chain is on the cytoplasmic side. Residues 122-142 (LLAVPALLYAINNYLKFIMQL) traverse the membrane as a helical segment. A topological domain (lumenal) is located at residue Tyr143. The helical transmembrane segment at 144-164 (FSPATVKMLSNLKVLVIAILL) threads the bilayer. Topologically, residues 165–171 (KFIMRRK) are cytoplasmic. A helical transmembrane segment spans residues 172-192 (FSIIQWEALALLLIGISVNQL). Residues 193-203 (SSIPDGTKSFG) lie on the Lumenal side of the membrane. A helical membrane pass occupies residues 204–224 (LAVTTIAYIYTLIFVTVPSLA). Residues 225–244 (SVYNEYALKSQFDTSIYLQN) lie on the Cytoplasmic side of the membrane. A helical membrane pass occupies residues 245 to 265 (LFLYGYGAIFNFLGILGTVIF). The Lumenal portion of the chain corresponds to 266–281 (QGPESFDILQGHSRAT). The helical transmembrane segment at 282–302 (MFLICNNAAQGILSSFFFKYA) threads the bilayer. Over 303–322 (DTILKKYSSTVATIFTGLAS) the chain is Cytoplasmic. Residues 323–343 (AAFLGHTLTVNFLLGISIVFI) form a helical membrane-spanning segment. At 344 to 405 (SMHQFFSPLA…TDERKPLLPI (62 aa)) the chain is on the lumenal side. Residues 386–405 (AADDASHLTSTDERKPLLPI) form a disordered region. The span at 389–405 (DASHLTSTDERKPLLPI) shows a compositional bias: basic and acidic residues.

This sequence belongs to the nucleotide-sugar transporter family. CMP-Sialate:CMP antiporter (TC 2.A.7.12) subfamily.

The protein resides in the golgi apparatus membrane. Its function is as follows. Sugar transporter involved in the transport of CMP-sialic acid from the cytoplasm into the Golgi. May transport important nucleotide sugars such as CMP-Kdo (2-keto-3-deoxy-D-manno-octulosonic acid) in physiological conditions. The polypeptide is CMP-sialic acid transporter 4 (Oryza sativa subsp. indica (Rice)).